Consider the following 450-residue polypeptide: Phosphoglucosamine mutase (450 aa).

The active-site Phosphoserine intermediate is the S103. Mg(2+) contacts are provided by S103, D243, D245, and D247. Phosphoserine is present on S103.

It belongs to the phosphohexose mutase family. Mg(2+) serves as cofactor. In terms of processing, activated by phosphorylation.

The enzyme catalyses alpha-D-glucosamine 1-phosphate = D-glucosamine 6-phosphate. Its function is as follows. Catalyzes the conversion of glucosamine-6-phosphate to glucosamine-1-phosphate. This chain is Phosphoglucosamine mutase, found in Latilactobacillus sakei subsp. sakei (strain 23K) (Lactobacillus sakei subsp. sakei).